Reading from the N-terminus, the 358-residue chain is Trans-enoyl reductase pvhC (358 aa).

48 to 51 lines the NADP(+) pocket; that stretch reads VDSK. A substrate-binding site is contributed by 134–141; it reads ISFLTSGL. NADP(+)-binding positions include 169 to 172, 192 to 195, Tyr-210, and 257 to 258; these read SSSC, SPHN, and LE. Substrate is bound at residue 278–282; sequence GPSLL. 347–348 provides a ligand contact to NADP(+); it reads VS.

It belongs to the zinc-containing alcohol dehydrogenase family. As to quaternary structure, monomer.

It participates in secondary metabolite biosynthesis. Trans-enoyl reductase; part of the gene cluster that mediates the biosynthesis of varicidin A, an antifungal natural product containing a cis-octahydrodecalin core. The PKS module of pvhA together with the enoylreductase pvhC catalyze the formation of the polyketide unit which is then conjugated to L-isoleucine by the condensation domain of the NRPS module. Activity of the Dieckmann cyclase domain (RED) of pvhA results in release of an acyclic tetramate. The cytochrome P450 monooxygenase pvhE then catalyzes the oxidation of the C21 methyl group to a to carboxylate group. The methyltransferase pvhD then further methylates the pvhE product. The Diels-Alderase pvhB is able to catalyze Diels-Alder cycloaddition using both pvhE and pvhD products as substrates to form the decalin ring, yielding varicidin B and A, respectively. The sequence is that of Trans-enoyl reductase pvhC from Talaromyces variabilis (Penicillium variabile).